The chain runs to 90 residues: Sec-independent protein translocase protein TatA (90 aa).

A helical membrane pass occupies residues 2 to 22; sequence GVGGISIWQLLIVLVIILLLF. Basic and acidic residues-rich tracts occupy residues 45-68 and 76-90; these read LRDE…HKAE and ADAD…DEHK. Residues 45–90 are disordered; it reads LRDEERRDAEEAATIEHKQAHKAENPSQRQQADADFKIKSGNDEHK.

This sequence belongs to the TatA/E family. In terms of assembly, the Tat system comprises two distinct complexes: a TatABC complex, containing multiple copies of TatA, TatB and TatC subunits, and a separate TatA complex, containing only TatA subunits. Substrates initially bind to the TatABC complex, which probably triggers association of the separate TatA complex to form the active translocon.

The protein resides in the cell inner membrane. Part of the twin-arginine translocation (Tat) system that transports large folded proteins containing a characteristic twin-arginine motif in their signal peptide across membranes. TatA could form the protein-conducting channel of the Tat system. The sequence is that of Sec-independent protein translocase protein TatA from Nitrosococcus oceani (strain ATCC 19707 / BCRC 17464 / JCM 30415 / NCIMB 11848 / C-107).